We begin with the raw amino-acid sequence, 205 residues long: S-crystallin SL11 (205 aa).

A GST N-terminal domain is found at 2–80; that stretch reads PSYTLYYFNG…YLAREFGFYG (79 aa). A GST C-terminal domain is found at 82–205; sequence NNMDMFKVDC…YIKKRNNTAF (124 aa).

It belongs to the GST superfamily. In terms of tissue distribution, lens.

In terms of biological role, S-crystallins are structural components of squids and octopi eye lens. Contains relatively little if any GST activity. This is S-crystallin SL11 from Nototodarus sloanii (Wellington flying squid).